We begin with the raw amino-acid sequence, 316 residues long: Glycine--tRNA ligase alpha subunit (316 aa).

This sequence belongs to the class-II aminoacyl-tRNA synthetase family. As to quaternary structure, tetramer of two alpha and two beta subunits.

The protein localises to the cytoplasm. The catalysed reaction is tRNA(Gly) + glycine + ATP = glycyl-tRNA(Gly) + AMP + diphosphate. This Cupriavidus taiwanensis (strain DSM 17343 / BCRC 17206 / CCUG 44338 / CIP 107171 / LMG 19424 / R1) (Ralstonia taiwanensis (strain LMG 19424)) protein is Glycine--tRNA ligase alpha subunit.